The sequence spans 612 residues: Dihydroxy-acid dehydratase (612 aa).

Position 81 (D81) interacts with Mg(2+). C122 contributes to the [2Fe-2S] cluster binding site. The Mg(2+) site is built by D123 and K124. Position 124 is an N6-carboxylysine (K124). [2Fe-2S] cluster is bound at residue C195. E491 contacts Mg(2+). S517 serves as the catalytic Proton acceptor.

It belongs to the IlvD/Edd family. In terms of assembly, homodimer. It depends on [2Fe-2S] cluster as a cofactor. Mg(2+) is required as a cofactor.

The catalysed reaction is (2R)-2,3-dihydroxy-3-methylbutanoate = 3-methyl-2-oxobutanoate + H2O. The enzyme catalyses (2R,3R)-2,3-dihydroxy-3-methylpentanoate = (S)-3-methyl-2-oxopentanoate + H2O. It functions in the pathway amino-acid biosynthesis; L-isoleucine biosynthesis; L-isoleucine from 2-oxobutanoate: step 3/4. Its pathway is amino-acid biosynthesis; L-valine biosynthesis; L-valine from pyruvate: step 3/4. In terms of biological role, functions in the biosynthesis of branched-chain amino acids. Catalyzes the dehydration of (2R,3R)-2,3-dihydroxy-3-methylpentanoate (2,3-dihydroxy-3-methylvalerate) into 2-oxo-3-methylpentanoate (2-oxo-3-methylvalerate) and of (2R)-2,3-dihydroxy-3-methylbutanoate (2,3-dihydroxyisovalerate) into 2-oxo-3-methylbutanoate (2-oxoisovalerate), the penultimate precursor to L-isoleucine and L-valine, respectively. The polypeptide is Dihydroxy-acid dehydratase (Haemophilus influenzae (strain PittGG)).